Here is a 236-residue protein sequence, read N- to C-terminus: Protein-L-isoaspartate O-methyltransferase 1 (236 aa).

S85 is an active-site residue.

This sequence belongs to the methyltransferase superfamily. L-isoaspartyl/D-aspartyl protein methyltransferase family.

It localises to the cytoplasm. The catalysed reaction is [protein]-L-isoaspartate + S-adenosyl-L-methionine = [protein]-L-isoaspartate alpha-methyl ester + S-adenosyl-L-homocysteine. In terms of biological role, catalyzes the methyl esterification of L-isoaspartyl residues in peptides and proteins that result from spontaneous decomposition of normal L-aspartyl and L-asparaginyl residues. It plays a role in the repair and/or degradation of damaged proteins. This Polaromonas sp. (strain JS666 / ATCC BAA-500) protein is Protein-L-isoaspartate O-methyltransferase 1.